The following is a 373-amino-acid chain: tRNA 2-selenouridine synthase (373 aa).

Positions 12–136 (FINDRPMMDA…MRGFLLETTE (125 aa)) constitute a Rhodanese domain. The active-site S-selanylcysteine intermediate is Cys-95.

This sequence belongs to the SelU family. Monomer.

The catalysed reaction is 5-methylaminomethyl-2-thiouridine(34) in tRNA + selenophosphate + (2E)-geranyl diphosphate + H2O + H(+) = 5-methylaminomethyl-2-selenouridine(34) in tRNA + (2E)-thiogeraniol + phosphate + diphosphate. It catalyses the reaction 5-methylaminomethyl-2-thiouridine(34) in tRNA + (2E)-geranyl diphosphate = 5-methylaminomethyl-S-(2E)-geranyl-thiouridine(34) in tRNA + diphosphate. It carries out the reaction 5-methylaminomethyl-S-(2E)-geranyl-thiouridine(34) in tRNA + selenophosphate + H(+) = 5-methylaminomethyl-2-(Se-phospho)selenouridine(34) in tRNA + (2E)-thiogeraniol. The enzyme catalyses 5-methylaminomethyl-2-(Se-phospho)selenouridine(34) in tRNA + H2O = 5-methylaminomethyl-2-selenouridine(34) in tRNA + phosphate. Functionally, involved in the post-transcriptional modification of the uridine at the wobble position (U34) of tRNA(Lys), tRNA(Glu) and tRNA(Gln). Catalyzes the conversion of 2-thiouridine (S2U-RNA) to 2-selenouridine (Se2U-RNA). Acts in a two-step process involving geranylation of 2-thiouridine (S2U) to S-geranyl-2-thiouridine (geS2U) and subsequent selenation of the latter derivative to 2-selenouridine (Se2U) in the tRNA chain. This is tRNA 2-selenouridine synthase from Ectopseudomonas mendocina (strain ymp) (Pseudomonas mendocina).